A 210-amino-acid chain; its full sequence is Prolactin (210 aa).

The signal sequence occupies residues 1-23 (MTQGSRLYFAVAVLMCGFVSING). 2 disulfides stabilise this stretch: Cys69–Cys183 and Cys200–Cys210.

It belongs to the somatotropin/prolactin family. As to expression, pituitary gland.

The protein localises to the secreted. The sequence is that of Prolactin (prl1) from Carassius auratus (Goldfish).